Reading from the N-terminus, the 592-residue chain is BRCA1-associated protein (592 aa).

Serine 52 carries the post-translational modification Phosphoserine. Positions lysine 78–aspartate 124 are disordered. The segment covering asparagine 80 to serine 94 has biased composition (basic and acidic residues). Phosphoserine occurs at positions 97, 117, and 119. The RING-type zinc finger occupies cysteine 264–arginine 304. A UBP-type; degenerate zinc finger spans residues proline 301–glycine 393. Residues cysteine 317, cysteine 320, cysteine 329, cysteine 332, cysteine 337, histidine 344, histidine 348, and histidine 354 each coordinate Zn(2+). Residues arginine 429–methionine 537 are a coiled coil. Positions alanine 565–lysine 592 are disordered. Basic residues predominate over residues proline 582–lysine 592.

In terms of assembly, interacts with the nuclear localization signal of BRCA1 and with the N-terminal of KSR1. The C-terminal portion of BCRA1 interacts with DDB1. As to expression, expressed in breast epithelial cell lines.

The protein resides in the cytoplasm. The catalysed reaction is S-ubiquitinyl-[E2 ubiquitin-conjugating enzyme]-L-cysteine + [acceptor protein]-L-lysine = [E2 ubiquitin-conjugating enzyme]-L-cysteine + N(6)-ubiquitinyl-[acceptor protein]-L-lysine.. It functions in the pathway protein modification; protein ubiquitination. Functionally, negatively regulates MAP kinase activation by limiting the formation of Raf/MEK complexes probably by inactivation of the KSR1 scaffold protein. Also acts as a Ras responsive E3 ubiquitin ligase that, on activation of Ras, is modified by auto-polyubiquitination resulting in the release of inhibition of Raf/MEK complex formation. May also act as a cytoplasmic retention protein with a role in regulating nuclear transport. The protein is BRCA1-associated protein of Homo sapiens (Human).